Here is a 116-residue protein sequence, read N- to C-terminus: Beta-2-microglobulin (116 aa).

Positions 1–19 are cleaved as a signal peptide; that stretch reads MRALITFALLCLLYITVQG. The Ig-like C1-type domain occupies 24–111; the sequence is PKVHVYSHFP…RHMKETKKFS (88 aa). A disulfide bridge links Cys44 with Cys99.

The protein belongs to the beta-2-microglobulin family. As to quaternary structure, heterodimer of an alpha chain and a beta chain. Beta-2-microglobulin is the beta-chain of major histocompatibility complex class I molecules.

The protein resides in the secreted. Component of the class I major histocompatibility complex (MHC). Involved in the presentation of peptide antigens to the immune system. The chain is Beta-2-microglobulin (b2m) from Danio rerio (Zebrafish).